The sequence spans 156 residues: NADH-ubiquinone oxidoreductase chain 6 (156 aa).

Helical transmembrane passes span 1–21 (MILT…YLAS), 24–44 (IVLG…FASF), 49–69 (FAFL…AYFL), 77–97 (ISNF…SALT), and 121–141 (STAP…VIVV).

Belongs to the complex I subunit 6 family.

Its subcellular location is the mitochondrion membrane. The enzyme catalyses a ubiquinone + NADH + 5 H(+)(in) = a ubiquinol + NAD(+) + 4 H(+)(out). Functionally, core subunit of the mitochondrial membrane respiratory chain NADH dehydrogenase (Complex I) that is believed to belong to the minimal assembly required for catalysis. Complex I functions in the transfer of electrons from NADH to the respiratory chain. The immediate electron acceptor for the enzyme is believed to be ubiquinone. The polypeptide is NADH-ubiquinone oxidoreductase chain 6 (ND6) (Lumbricus terrestris (Common earthworm)).